A 266-amino-acid chain; its full sequence is UPF0294 protein YafD (266 aa).

The protein belongs to the UPF0294 family.

The protein resides in the cytoplasm. The sequence is that of UPF0294 protein YafD from Salmonella dublin (strain CT_02021853).